The following is a 451-amino-acid chain: COBRA-like protein 6 (451 aa).

A signal peptide spans 1-21; the sequence is MAVLGSLLLLILAATLSVAVA. 8 N-linked (GlcNAc...) asparagine glycosylation sites follow: N30, N155, N163, N202, N227, N323, N338, and N357. N426 is lipidated: GPI-anchor amidated asparagine. The propeptide at 427 to 451 is removed in mature form; the sequence is AAPPAAASLVGSAVAMAALVFFLMA.

Belongs to the COBRA family.

The protein localises to the cell membrane. Involved in determining the orientation of cell expansion, probably by playing an important role in cellulose deposition. May act by recruiting cellulose synthesizing complexes to discrete positions on the cell surface. This is COBRA-like protein 6 (BC1L7) from Oryza sativa subsp. japonica (Rice).